Reading from the N-terminus, the 161-residue chain is Ribosomal RNA large subunit methyltransferase H (161 aa).

S-adenosyl-L-methionine contacts are provided by residues leucine 78, glycine 110, and 129 to 134 (LSRLTF).

The protein belongs to the RNA methyltransferase RlmH family. In terms of assembly, homodimer.

It is found in the cytoplasm. It carries out the reaction pseudouridine(1915) in 23S rRNA + S-adenosyl-L-methionine = N(3)-methylpseudouridine(1915) in 23S rRNA + S-adenosyl-L-homocysteine + H(+). Functionally, specifically methylates the pseudouridine at position 1915 (m3Psi1915) in 23S rRNA. This is Ribosomal RNA large subunit methyltransferase H from Heliobacterium modesticaldum (strain ATCC 51547 / Ice1).